A 93-amino-acid polypeptide reads, in one-letter code: Alpha-defensin 5 (93 aa).

Residues 1–19 form the signal peptide; the sequence is MKTFVLLSALVLLAFQVQA. A propeptide spanning residues 20–58 is cleaved from the precursor; that stretch reads DPIHKTDEETNTEEQPGEEDQAVSISFGGQEGSALHEEL. 3 disulfides stabilise this stretch: Cys64–Cys92, Cys66–Cys81, and Cys71–Cys91.

This sequence belongs to the alpha-defensin family.

It is found in the secreted. Its function is as follows. Probably contributes to the antimicrobial barrier function of the small bowel mucosa. The sequence is that of Alpha-defensin 5 (Defa5) from Mus musculus (Mouse).